A 251-amino-acid chain; its full sequence is uncharacterized protein (251 aa).

6 residues coordinate a divalent metal cation: His-5, His-7, Glu-101, His-132, His-163, and Asp-209.

This sequence belongs to the metallo-dependent hydrolases superfamily. TatD-type hydrolase family. The cofactor is a divalent metal cation.

This is an uncharacterized protein from Methanocaldococcus jannaschii (strain ATCC 43067 / DSM 2661 / JAL-1 / JCM 10045 / NBRC 100440) (Methanococcus jannaschii).